Here is a 272-residue protein sequence, read N- to C-terminus: Acetylglutamate kinase (272 aa).

Substrate-binding positions include 41–42, R63, and N166; that span reads GG.

Belongs to the acetylglutamate kinase family. ArgB subfamily.

It is found in the cytoplasm. The catalysed reaction is N-acetyl-L-glutamate + ATP = N-acetyl-L-glutamyl 5-phosphate + ADP. Its pathway is amino-acid biosynthesis; L-arginine biosynthesis; N(2)-acetyl-L-ornithine from L-glutamate: step 2/4. Catalyzes the ATP-dependent phosphorylation of N-acetyl-L-glutamate. This chain is Acetylglutamate kinase, found in Anaeromyxobacter sp. (strain K).